We begin with the raw amino-acid sequence, 181 residues long: Oligoribonuclease (181 aa).

The region spanning 8–171 (LIWIDLEMTG…DDIRESIAEL (164 aa)) is the Exonuclease domain. Residue Tyr-129 is part of the active site.

The protein belongs to the oligoribonuclease family.

It is found in the cytoplasm. In terms of biological role, 3'-to-5' exoribonuclease specific for small oligoribonucleotides. The protein is Oligoribonuclease of Alcanivorax borkumensis (strain ATCC 700651 / DSM 11573 / NCIMB 13689 / SK2).